Consider the following 146-residue polypeptide: Leptin (146 aa).

Cysteines 96 and 146 form a disulfide.

The protein belongs to the leptin family.

It is found in the secreted. Its function is as follows. Key player in the regulation of energy balance and body weight control. Once released into the circulation, has central and peripheral effects by binding LEPR, found in many tissues, which results in the activation of several major signaling pathways. In the hypothalamus, acts as an appetite-regulating factor that induces a decrease in food intake and an increase in energy consumption by inducing anorexinogenic factors and suppressing orexigenic neuropeptides, also regulates bone mass and secretion of hypothalamo-pituitary-adrenal hormones. In the periphery, increases basal metabolism, influences reproductive function, regulates pancreatic beta-cell function and insulin secretion, is pro-angiogenic for endothelial cell and affects innate and adaptive immunity. In the arcuate nucleus of the hypothalamus, activates by depolarization POMC neurons inducing FOS and SOCS3 expression to release anorexigenic peptides and inhibits by hyperpolarization NPY neurons inducing SOCS3 with a consequent reduction on release of orexigenic peptides. In addition to its known satiety inducing effect, has a modulatory role in nutrient absorption. In the intestine, reduces glucose absorption by enterocytes by activating PKC and leading to a sequential activation of p38, PI3K and ERK signaling pathways which exerts an inhibitory effect on glucose absorption. Acts as a growth factor on certain tissues, through the activation of different signaling pathways increases expression of genes involved in cell cycle regulation such as CCND1, via JAK2-STAT3 pathway, or VEGFA, via MAPK1/3 and PI3K-AKT1 pathways. May also play an apoptotic role via JAK2-STAT3 pathway and up-regulation of BIRC5 expression. Pro-angiogenic, has mitogenic activity on vascular endothelial cells and plays a role in matrix remodeling by regulating the expression of matrix metalloproteinases (MMPs) and tissue inhibitors of metalloproteinases (TIMPs). In innate immunity, modulates the activity and function of neutrophils by increasing chemotaxis and the secretion of oxygen radicals. Increases phagocytosis by macrophages and enhances secretion of pro-inflammatory mediators. Increases cytotoxic ability of NK cells. Plays a pro-inflammatory role, in synergy with IL1B, by inducing NOS2 which promotes the production of IL6, IL8 and Prostaglandin E2, through a signaling pathway that involves JAK2, PI3K, MAP2K1/MEK1 and MAPK14/p38. In adaptive immunity, promotes the switch of memory T-cells towards T helper-1 cell immune responses. Increases CD4(+)CD25(-) T-cell proliferation and reduces autophagy during TCR (T-cell receptor) stimulation, through MTOR signaling pathway activation and BCL2 up-regulation. In Pongo pygmaeus (Bornean orangutan), this protein is Leptin (LEP).